A 263-amino-acid chain; its full sequence is Acyl-[acyl-carrier-protein]--UDP-N-acetylglucosamine O-acyltransferase (263 aa).

The protein belongs to the transferase hexapeptide repeat family. LpxA subfamily. As to quaternary structure, homotrimer.

The protein resides in the cytoplasm. The enzyme catalyses a (3R)-hydroxyacyl-[ACP] + UDP-N-acetyl-alpha-D-glucosamine = a UDP-3-O-[(3R)-3-hydroxyacyl]-N-acetyl-alpha-D-glucosamine + holo-[ACP]. It functions in the pathway glycolipid biosynthesis; lipid IV(A) biosynthesis; lipid IV(A) from (3R)-3-hydroxytetradecanoyl-[acyl-carrier-protein] and UDP-N-acetyl-alpha-D-glucosamine: step 1/6. Involved in the biosynthesis of lipid A, a phosphorylated glycolipid that anchors the lipopolysaccharide to the outer membrane of the cell. This chain is Acyl-[acyl-carrier-protein]--UDP-N-acetylglucosamine O-acyltransferase, found in Aeromonas salmonicida (strain A449).